The following is a 363-amino-acid chain: S-adenosylmethionine:tRNA ribosyltransferase-isomerase (363 aa).

Belongs to the QueA family. In terms of assembly, monomer.

The protein resides in the cytoplasm. The catalysed reaction is 7-aminomethyl-7-carbaguanosine(34) in tRNA + S-adenosyl-L-methionine = epoxyqueuosine(34) in tRNA + adenine + L-methionine + 2 H(+). Its pathway is tRNA modification; tRNA-queuosine biosynthesis. Its function is as follows. Transfers and isomerizes the ribose moiety from AdoMet to the 7-aminomethyl group of 7-deazaguanine (preQ1-tRNA) to give epoxyqueuosine (oQ-tRNA). The chain is S-adenosylmethionine:tRNA ribosyltransferase-isomerase from Brucella abortus (strain S19).